The following is a 216-amino-acid chain: ATP-dependent dethiobiotin synthetase BioD (216 aa).

Residue 12–17 (NVGKTF) coordinates ATP. Thr16 contacts Mg(2+). Residue Lys36 is part of the active site. Residue Ser40 coordinates substrate. Residues Asp53, 110–113 (EGAG), and 170–171 (NQ) each bind ATP. Mg(2+) is bound by residues Asp53 and Glu110.

It belongs to the dethiobiotin synthetase family. Homodimer. It depends on Mg(2+) as a cofactor.

Its subcellular location is the cytoplasm. The catalysed reaction is (7R,8S)-7,8-diammoniononanoate + CO2 + ATP = (4R,5S)-dethiobiotin + ADP + phosphate + 3 H(+). It functions in the pathway cofactor biosynthesis; biotin biosynthesis; biotin from 7,8-diaminononanoate: step 1/2. Catalyzes a mechanistically unusual reaction, the ATP-dependent insertion of CO2 between the N7 and N8 nitrogen atoms of 7,8-diaminopelargonic acid (DAPA, also called 7,8-diammoniononanoate) to form a ureido ring. The chain is ATP-dependent dethiobiotin synthetase BioD from Vesicomyosocius okutanii subsp. Calyptogena okutanii (strain HA).